We begin with the raw amino-acid sequence, 209 residues long: Ribosomal RNA large subunit methyltransferase E (209 aa).

Positions 60, 62, 80, 96, and 121 each coordinate S-adenosyl-L-methionine. Lysine 161 (proton acceptor) is an active-site residue. Residues 182 to 196 (VQMRKPSSSRDRSRE) are compositionally biased toward basic and acidic residues. Positions 182-209 (VQMRKPSSSRDRSREQYLLGRGFRGRSE) are disordered.

This sequence belongs to the class I-like SAM-binding methyltransferase superfamily. RNA methyltransferase RlmE family.

Its subcellular location is the cytoplasm. It carries out the reaction uridine(2552) in 23S rRNA + S-adenosyl-L-methionine = 2'-O-methyluridine(2552) in 23S rRNA + S-adenosyl-L-homocysteine + H(+). Its function is as follows. Specifically methylates the uridine in position 2552 of 23S rRNA at the 2'-O position of the ribose in the fully assembled 50S ribosomal subunit. The protein is Ribosomal RNA large subunit methyltransferase E of Pseudomonas fluorescens (strain ATCC BAA-477 / NRRL B-23932 / Pf-5).